Consider the following 345-residue polypeptide: Beta-ketoacyl-[acyl-carrier-protein] synthase III (345 aa).

Residues Cys-114 and His-272 contribute to the active site. The ACP-binding stretch occupies residues 273–277 (QANQR). Asn-302 is a catalytic residue.

It belongs to the thiolase-like superfamily. FabH family. Homodimer.

The protein resides in the cytoplasm. It catalyses the reaction malonyl-[ACP] + acetyl-CoA + H(+) = 3-oxobutanoyl-[ACP] + CO2 + CoA. It functions in the pathway lipid metabolism; fatty acid biosynthesis. Catalyzes the condensation reaction of fatty acid synthesis by the addition to an acyl acceptor of two carbons from malonyl-ACP. Catalyzes the first condensation reaction which initiates fatty acid synthesis and may therefore play a role in governing the total rate of fatty acid production. Possesses both acetoacetyl-ACP synthase and acetyl transacylase activities. Its substrate specificity determines the biosynthesis of branched-chain and/or straight-chain of fatty acids. This is Beta-ketoacyl-[acyl-carrier-protein] synthase III from Rhodopirellula baltica (strain DSM 10527 / NCIMB 13988 / SH1).